A 273-amino-acid polypeptide reads, in one-letter code: Imidazole glycerol phosphate synthase subunit HisF (273 aa).

Catalysis depends on residues Asp11 and Asp134.

The protein belongs to the HisA/HisF family. Heterodimer of HisH and HisF.

It localises to the cytoplasm. It catalyses the reaction 5-[(5-phospho-1-deoxy-D-ribulos-1-ylimino)methylamino]-1-(5-phospho-beta-D-ribosyl)imidazole-4-carboxamide + L-glutamine = D-erythro-1-(imidazol-4-yl)glycerol 3-phosphate + 5-amino-1-(5-phospho-beta-D-ribosyl)imidazole-4-carboxamide + L-glutamate + H(+). Its pathway is amino-acid biosynthesis; L-histidine biosynthesis; L-histidine from 5-phospho-alpha-D-ribose 1-diphosphate: step 5/9. Its function is as follows. IGPS catalyzes the conversion of PRFAR and glutamine to IGP, AICAR and glutamate. The HisF subunit catalyzes the cyclization activity that produces IGP and AICAR from PRFAR using the ammonia provided by the HisH subunit. The sequence is that of Imidazole glycerol phosphate synthase subunit HisF from Methanosarcina acetivorans (strain ATCC 35395 / DSM 2834 / JCM 12185 / C2A).